The primary structure comprises 377 residues: Benzylmalonyl-CoA dehydrogenase (377 aa).

Residues 123 to 132 (ICMTEPNAGS), 156 to 158 (WIT), Arg266, Gln277, and 363 to 365 (TSE) contribute to the FAD site.

Belongs to the acyl-CoA dehydrogenase family. Homotetramer. It depends on FAD as a cofactor.

The enzyme catalyses (2-aminobenzyl)malonyl-CoA + O2 + H(+) = (E)-2-aminocinnamoyl-CoA + H2O2 + CO2. It catalyses the reaction benzylmalonyl-CoA + O2 + H(+) = (E)-cinnamoyl-CoA + H2O2 + CO2. Its function is as follows. Involved in degradation of indoleacetate, the most common member of the auxin class of plant hormones. Catalyzes the irreversible oxidative decarboxylation of (2-aminobenzyl)malonyl-CoA to 2-aminocinnamoyl-CoA and CO(2). In vitro, shows high catalytic efficiency with benzylmalonyl-CoA, a chemical analog of the physiological substrate, but otherwise accepts only a few medium-chain alkylmalonyl-CoA compounds as alternative substrates with low activities. This chain is Benzylmalonyl-CoA dehydrogenase, found in Aromatoleum aromaticum (strain DSM 19018 / LMG 30748 / EbN1) (Azoarcus sp. (strain EbN1)).